Consider the following 452-residue polypeptide: COBRA-like protein 1 (452 aa).

The signal sequence occupies residues 1–33 (MGFFLCSSSSIFFKFGISIIFLVSFSGLTPSEA). Asn-42, Asn-167, Asn-175, Asn-214, Asn-239, Asn-254, Asn-323, Asn-338, and Asn-357 each carry an N-linked (GlcNAc...) asparagine glycan. The GPI-anchor amidated serine moiety is linked to residue Ser-432. Positions 433 to 452 (VGSLFAAMALLLIVFLHGNL) are cleaved as a propeptide — removed in mature form.

Belongs to the COBRA family. As to expression, expressed in roots, stems, leaves, flowers and siliques.

It localises to the cell membrane. This is COBRA-like protein 1 (COBL1) from Arabidopsis thaliana (Mouse-ear cress).